The chain runs to 63 residues: Sec-independent protein translocase protein TatA (63 aa).

Residues 1–21 (MGSFSMWHWLIVLVIVLLLFG) form a helical membrane-spanning segment. The interval 42–63 (GMTDEDAPDTAKTVDHKADETK) is disordered. Over residues 53–63 (KTVDHKADETK) the composition is skewed to basic and acidic residues.

It belongs to the TatA/E family. The Tat system comprises two distinct complexes: a TatABC complex, containing multiple copies of TatA, TatB and TatC subunits, and a separate TatA complex, containing only TatA subunits. Substrates initially bind to the TatABC complex, which probably triggers association of the separate TatA complex to form the active translocon.

The protein resides in the cell inner membrane. Part of the twin-arginine translocation (Tat) system that transports large folded proteins containing a characteristic twin-arginine motif in their signal peptide across membranes. TatA could form the protein-conducting channel of the Tat system. The protein is Sec-independent protein translocase protein TatA of Rhizobium leguminosarum bv. trifolii (strain WSM2304).